The chain runs to 429 residues: L-cysteine:1D-myo-inositol 2-amino-2-deoxy-alpha-D-glucopyranoside ligase (429 aa).

Cys-60 provides a ligand contact to Zn(2+). Residues 60–63 (CGIT), Thr-75, and 98–100 (NIT) contribute to the L-cysteinyl-5'-AMP site. A 'HIGH' region motif is present at residues 62 to 72 (ITPYDATHLGH). A 'ERGGDP' region motif is present at residues 204 to 209 (ERGGDP). Trp-244 contacts L-cysteinyl-5'-AMP. Zn(2+) is bound at residue Cys-248. Residue 266–268 (GSD) participates in L-cysteinyl-5'-AMP binding. Residue His-273 participates in Zn(2+) binding. L-cysteinyl-5'-AMP is bound at residue Ile-300. Positions 306-310 (KMSKS) match the 'KMSKS' region motif.

This sequence belongs to the class-I aminoacyl-tRNA synthetase family. MshC subfamily. As to quaternary structure, monomer. It depends on Zn(2+) as a cofactor.

The catalysed reaction is 1D-myo-inositol 2-amino-2-deoxy-alpha-D-glucopyranoside + L-cysteine + ATP = 1D-myo-inositol 2-(L-cysteinylamino)-2-deoxy-alpha-D-glucopyranoside + AMP + diphosphate + H(+). Catalyzes the ATP-dependent condensation of GlcN-Ins and L-cysteine to form L-Cys-GlcN-Ins. The sequence is that of L-cysteine:1D-myo-inositol 2-amino-2-deoxy-alpha-D-glucopyranoside ligase from Mycolicibacterium vanbaalenii (strain DSM 7251 / JCM 13017 / BCRC 16820 / KCTC 9966 / NRRL B-24157 / PYR-1) (Mycobacterium vanbaalenii).